Here is a 523-residue protein sequence, read N- to C-terminus: MSRPYDSMEPKVMDDDMLKAAVGEQGPQEEAGQLAKQEGILFKDVLSLQLDFQNILRIDNLWQFENLKKLQLNNNIIERIEGLTNLIHLVWLDLSFNNIEAIEGLDTLVNLEDLSLSNNRISKVDSLDALVKLQVLSLGNNQISNMMNIIYLRRFPCLRTLSLAGNPVSEAEEYKMFIYAYLSDLVYLDFRRVDEQMREMAKMKHQYSIDELKHREAQLQMKLEEEQAKQEKLEEHKMAFVEHLNGPFLFDSMYSEDVEGNKLSYLPGVRELLEAYKDKFVIICLNIFEYGLNQQEKRKVELDTFNECIQEAILENQDQGKLKVAKFEEKHLLNLNAIREETDLSNIEKKLTECTESIGELFNTLMILEMQLVEQLEETINIFERNITDLVGLFIENVQSLIAQCRDLENHHHEKLLEIAINTLEKILKGEMDEDLPDDVRALFVDKDTIVNAVGASHDIHLLKIDNREDELVTGINSWCAHLVDKIHKDEIMRNRKRVKEINQFVDHMQSELDNLECGDIID.

LRR repeat units follow at residues Asp-44–Glu-65, Asn-66–Ile-87, His-88–Val-109, Asn-110–Val-131, and Lys-132–Arg-153. The 39-residue stretch at Asn-166 to Lys-204 folds into the LRRCT domain. 2 coiled-coil regions span residues Lys-204–Glu-242 and Leu-333–Leu-393.

It belongs to the DRC3 family. In terms of assembly, component of the nexin-dynein regulatory complex (N-DRC). Interacts with DRC1. Interacts with TCTE1/DRC5. Interacts with DRC7.

The protein localises to the cytoplasm. It is found in the cytoskeleton. It localises to the cilium axoneme. The protein resides in the cell projection. Its subcellular location is the cilium. The protein localises to the flagellum axoneme. It is found in the flagellum. Functionally, component of the nexin-dynein regulatory complex (N-DRC) a key regulator of ciliary/flagellar motility which maintains the alignment and integrity of the distal axoneme and regulates microtubule sliding in motile axonemes. The chain is Dynein regulatory complex subunit 3 (Drc3) from Mus musculus (Mouse).